The sequence spans 321 residues: Sideroflexin-1-3 (321 aa).

Transmembrane regions (helical) follow at residues 101 to 121 (IITG…FWQW), 146 to 168 (LVTS…NHAV), 174 to 194 (LLGR…NIPC), 220 to 240 (AAVV…IPGM), and 266 to 286 (IQTL…CAFF).

It belongs to the sideroflexin family.

It is found in the mitochondrion membrane. In terms of biological role, mitochondrial amino-acid transporter that mediates transport of serine into mitochondria. In Drosophila melanogaster (Fruit fly), this protein is Sideroflexin-1-3.